The following is a 74-amino-acid chain: CLAVATA3/ESR (CLE)-related protein 1 (74 aa).

A signal peptide spans 1–22; the sequence is MANLKFLLCLFLICVSLSRSSA. An N-linked (GlcNAc...) asparagine glycan is attached at Asn59. 2 positions are modified to hydroxyproline: Pro66 and Pro69. O-linked (Ara...) hydroxyproline glycosylation is present at Pro69.

The protein belongs to the CLV3/ESR signal peptide family. In terms of processing, the O-glycosylation (arabinosylation) of the hydroxyproline Pro-69 enhances binding affinity of the CLE1p peptide for its receptor. As to expression, mostly expressed in roots and seedlings, and, to a lower extent, in stems and apex.

The protein resides in the secreted. Its subcellular location is the extracellular space. Functionally, extracellular signal peptide that regulates cell fate. This chain is CLAVATA3/ESR (CLE)-related protein 1, found in Arabidopsis thaliana (Mouse-ear cress).